The chain runs to 243 residues: NADH-ubiquinone oxidoreductase chain 6 (243 aa).

The next 5 membrane-spanning stretches (helical) occupy residues 16-36 (ISSV…SVIV), 41-61 (IISV…LILL), 69-89 (AYLI…LMLI), 104-124 (IPLT…LLPY), and 201-221 (IWLF…IVII).

It belongs to the complex I subunit 6 family.

The protein resides in the mitochondrion membrane. It carries out the reaction a ubiquinone + NADH + 5 H(+)(in) = a ubiquinol + NAD(+) + 4 H(+)(out). Core subunit of the mitochondrial membrane respiratory chain NADH dehydrogenase (Complex I) that is believed to belong to the minimal assembly required for catalysis. Complex I functions in the transfer of electrons from NADH to the respiratory chain. The immediate electron acceptor for the enzyme is believed to be ubiquinone. This Neurospora crassa (strain ATCC 24698 / 74-OR23-1A / CBS 708.71 / DSM 1257 / FGSC 987) protein is NADH-ubiquinone oxidoreductase chain 6 (ndh-6).